A 1409-amino-acid polypeptide reads, in one-letter code: Copia protein (1409 aa).

A CCHC-type zinc finger spans residues Val230 to His247. Asp292 functions as the For protease activity in the catalytic mechanism. In terms of domain architecture, Integrase catalytic spans His476–Lys644. Disordered stretches follow at residues Ser760 to Phe780 and Asn805 to Ile851. Basic and acidic residues predominate over residues Glu827–Gly841.

The protein is Copia protein (GIP) of Drosophila melanogaster (Fruit fly).